Consider the following 184-residue polypeptide: Structural protein V8 (184 aa).

A disordered region spans residues 14 to 35 (IYNKSNTLTNTPSNPTGNTNTL).

The protein belongs to the sputnik virus V6 family.

Its subcellular location is the virion. In Sputnik virophage, this protein is Structural protein V8.